The sequence spans 1249 residues: MSTVVAQALHVFGLRPHVTNNVFFFDEQIIIFPSGNHCVKYNIDQKWQKFIAGSDKSQGMLALAISPNRRYLAISETVQEKPAVTIYELSSIPCRKRKVLNNFDFQVQKFTSMAFSPDSKYLLTQTSPPDSNLVYWLWEKQKVMAIIKADSQNNPIYQVSISSQDNSQVCITGSGVFKLLRFAEGTLKQINFQRGESSNYLAHAWVSEDRVIVGTDTGKLFLFESGDQRWETSIMVKESTSSRSLEVIQESESLIEFPPLSSPVSSVERMDITTNTQQQAMPQVFAIAAYSKGFACSAGPGRVLLFEKVEEKDFYRESREIRIPTDQQSNDPSQSDKQDVLCLCFSPSEETLIASTNKNQLYSITMSLTEISKGEAAHFEYLLYPLHSASITGLDTCIRKPLIATCSLDRSVRIWNYESNTLELYKEYQEEAYTVSLHPSGHYIVVGFADKLRLMNLLIDDIRPFKEYSVRGCKECSFSNGGHLFAAVNGNVIHIFTTTSLENINILKGHTGKIRSLVWNLDDSKLVSAGTDGAVYEWNLSTGKRETECVLKSCSYNSVTTSPDAKVIFAVGSDQTLKEISDSLILREIPAFDVIYTSITISHSGRMIFVGTSVGTIRAMKYPLSLQKEYNEYQAHAGPVMKMLLTFDDQFLLTVGEDGCLFTWKVFDKDGRGIKREREVGFAEEVLVTKTDMEEKAQIMLELKTRVEELKMENEYQLRLKDMNYTEKIKELTDKFIQEMESLKTKNQVLKTEKEKQDISHRERLEELVDKQTRELQDLECCNNQKLLLEYEKYQELQLKSQRMQEEYEKQLRDNDETKSQALEELTEFYEAKLQEKTGLLEEAQEDVRQQLREFEETKKQIEEDEDREIQDIKTKYERKLRDEKESNLRLKGETGIMRKKFSSLQKEIEERTNDIELLKSEQMKLQGIIRSLEKDIQGLKREIQERDETIQDKEKRIYDLKKKNQELEKFKFVLDYKIKELKKQIEPRENEIKVMKEQIQEMEAELERFHKQNTQLELNITELLQKLRATDQEMRKEQQKERDLEALVRRFKTDLHNCVAYIQEPGLLKEKIRGLFEKYVQRADMVEIAGLNSDLQQEYARQREHLERNLATLKKKVIKEGELHRTDYVRIMQENVSLIKEINELRRELKLTRSQIYDLESALKVSKKTRSQEVPESVISKDVVGSTSTMRLNEQEETGRIIEMQRLEIRRLRDQIQEQEQVPGFHTIAGVRLPSIVDSDVDFEVHTK.

WD repeat units lie at residues 105–148, 195–233, 335–374, 386–425, 427–469, 471–506, 509–548, and 635–674; these read FQVQ…AIIK, GESS…WETS, SDKQ…ISKG, LHSA…LELY, EYQE…KEYS, RGCK…NINI, GHTG…RETE, and AHAG…GRGI. 2 coiled-coil regions span residues 690–1056 and 1094–1165; these read KTDM…KTDL and SDLQ…SALK.

It belongs to the CFAP57 family. In terms of assembly, may form homodimers. Associates with components of the nexin-dynein regulatory complex (N-DRC) and the CFAP184:CFAP263 complex. As to expression, predominanly expressed in testis, lung and skin. Weak expression in brain and kidney.

Its subcellular location is the cytoplasm. The protein resides in the cytoskeleton. The protein localises to the cilium axoneme. In terms of biological role, associates with components of the nexin-dynein regulatory complex (N-DRC), a key regulator of ciliary/flagellar motility, and might act as an inner dynein arm (IDA) hub or linkage. The polypeptide is Cilia- and flagella-associated protein 57 (Mus musculus (Mouse)).